The primary structure comprises 150 residues: Soluble pyridine nucleotide transhydrogenase (150 aa).

Belongs to the class-I pyridine nucleotide-disulfide oxidoreductase family. Requires FAD as cofactor.

The protein localises to the cytoplasm. The catalysed reaction is NAD(+) + NADPH = NADH + NADP(+). Functionally, conversion of NADPH, generated by peripheral catabolic pathways, to NADH, which can enter the respiratory chain for energy generation. This is Soluble pyridine nucleotide transhydrogenase (sthA) from Pectobacterium carotovorum subsp. carotovorum (Erwinia carotovora subsp. carotovora).